We begin with the raw amino-acid sequence, 37 residues long: Calcitonin gene-related peptide 1 (37 aa).

Residues Cys-2 and Cys-7 are joined by a disulfide bond. Phe-37 is modified (phenylalanine amide).

It belongs to the calcitonin family.

The protein localises to the secreted. In terms of biological role, CGRP1/CALCA is a peptide hormone that induces vasodilation mediated by the CALCRL-RAMP1 receptor complex. Dilates a variety of vessels including the coronary, cerebral and systemic vasculature. Its abundance in the CNS also points toward a neurotransmitter or neuromodulator role. It also elevates platelet cAMP. CGRP1 can also bind and activate CALCR-RAMP1 (AMYR1) receptor complex. The polypeptide is Calcitonin gene-related peptide 1 (CALCA) (Sus scrofa (Pig)).